A 136-amino-acid chain; its full sequence is MKKTGLALVLATILLGMMGSVHAQEPRVVKVPACIGLNQSQVATQVKRDFLQNRIPRWEADKKQLGTDKPVVWINVVDIIGKDDIWQVPLIARGNKGDKTYQVVLDCKSGTMTYTGLNAQTRPDPQIGLNSQAGPK.

Residues 1 to 23 form the signal peptide; that stretch reads MKKTGLALVLATILLGMMGSVHA. Residues 30–117 form the YebF/Cmi domain; it reads KVPACIGLNQ…KSGTMTYTGL (88 aa). Residues Cys-34 and Cys-107 are joined by a disulfide bond. Residues 117-136 form a disordered region; sequence LNAQTRPDPQIGLNSQAGPK.

It belongs to the YebF family.

It localises to the secreted. This Yersinia pseudotuberculosis serotype O:1b (strain IP 31758) protein is Protein YebF.